The sequence spans 283 residues: Thymidylate synthase (283 aa).

Arg22 lines the dUMP pocket. Residue Cys160 is the Nucleophile of the active site. Residues 180-183, Asn191, and 221-223 each bind dUMP; these read RSCD and HIY. Asp183 is a (6R)-5,10-methylene-5,6,7,8-tetrahydrofolate binding site. Ser282 contacts (6R)-5,10-methylene-5,6,7,8-tetrahydrofolate.

The protein belongs to the thymidylate synthase family. Bacterial-type ThyA subfamily. In terms of assembly, homodimer.

The protein resides in the cytoplasm. It carries out the reaction dUMP + (6R)-5,10-methylene-5,6,7,8-tetrahydrofolate = 7,8-dihydrofolate + dTMP. Its pathway is pyrimidine metabolism; dTTP biosynthesis. Its function is as follows. Catalyzes the reductive methylation of 2'-deoxyuridine-5'-monophosphate (dUMP) to 2'-deoxythymidine-5'-monophosphate (dTMP) while utilizing 5,10-methylenetetrahydrofolate (mTHF) as the methyl donor and reductant in the reaction, yielding dihydrofolate (DHF) as a by-product. This enzymatic reaction provides an intracellular de novo source of dTMP, an essential precursor for DNA biosynthesis. The sequence is that of Thymidylate synthase from Haemophilus influenzae (strain PittEE).